The primary structure comprises 173 residues: Gamma-crystallin S-1 (173 aa).

Beta/gamma crystallin 'Greek key' domains are found at residues 2-40 (GKII…RVES) and 41-83 (DWWV…RMLP). The interval 84 to 88 (HTGRS) is connecting peptide. 2 Beta/gamma crystallin 'Greek key' domains span residues 89–129 (YRMR…QVMD) and 130–172 (GYWI…RRIM).

This sequence belongs to the beta/gamma-crystallin family.

Functionally, crystallins are the dominant structural components of the vertebrate eye lens. This Chiloscyllium indicum (Slender bamboo shark) protein is Gamma-crystallin S-1 (GS-1).